We begin with the raw amino-acid sequence, 506 residues long: Cytochrome P450 71B8 (506 aa).

A helical transmembrane segment spans residues 5-25 (ILLCFFFLFPLLLTLFKKLLP). Cys-443 contacts heme.

Belongs to the cytochrome P450 family. It depends on heme as a cofactor.

The protein resides in the membrane. The sequence is that of Cytochrome P450 71B8 (CYP71B8) from Arabidopsis thaliana (Mouse-ear cress).